Consider the following 700-residue polypeptide: MSKSAFTSKSQLKGIDGSFNDPFRQPSMNLPTPPHDDGLPSIPRSTALPNLSNRLSPYSHRNYLPIPEADSRNLEVLNSISLTTGSVVNQINKLYQRSCDNANYLQDLRSLILQTPTAEANATQVTESLNQIQKILQEASSKDREQIVQVIKELNKGNSLEVRRELGNCLAHLKKGTLNIDNALQASLQKYWKELQYFNVSKDKLLSLEESIKLLSARLEETDTPSSTHWIEINAGFKEVGDELSENFQRKQEILSGLQNNVILRTNNRKPVGSDGSNSNFNGGEEQMDSKDQEEIQDYLNSLLSVHEKDGVLLQKFHNSYVQYQKLAVALSKYENFDADKLFQQMNLAKQSNETLLQTLTEQTDQLLSFKETMDSFKFILGPSMENQALQQGILAEQQDLVAQLRDIVLRSETLAENPSNMPGSCLPGASSNTADEFTEQLNLLKNEVARLSAICPSPNSGINASVLTNADNLEKENLLLVNNNAFKVDDRSVSSVALDDHNRQLQMNVEELEGKKADLTSKINRLDKDFVKLNTTYSLLTDQVKTKQLALQEIESRVIRLEERLNMLQKLSMQPAISSSSEFVPIESHPSSSAVVPIEEPKNSIIEKKRVPHNAARNSVNLEVTLPNSKKRFSSFSGSSSKLPVRPSTALTDKRKPSWSRRLAAAIGFSSGSPEKKHVITSSDAGHQRSKSRSFSSKM.

2 stretches are compositionally biased toward polar residues: residues 1-11 (MSKSAFTSKSQ) and 43-53 (PRSTALPNLSN). 2 disordered regions span residues 1-53 (MSKS…NLSN) and 266-293 (TNNR…SKDQ). Over residues 273-284 (GSDGSNSNFNGG) the composition is skewed to low complexity. A coiled-coil region spans residues 496 to 575 (SVALDDHNRQ…LNMLQKLSMQ (80 aa)). 2 disordered regions span residues 634–659 (FSSF…RKPS) and 671–700 (SSGS…SSKM). A Phosphoserine modification is found at Ser-636.

In terms of assembly, interacts with cdr2, mid1 and sad1.

Its subcellular location is the cytoplasm. The protein localises to the cytoskeleton. In terms of biological role, at the onset of mitosis, forms a medial ring structure before the arrangement of the medial actin ring. Essential for the central positioning of the division septum before the cell divides. This is Mitosis inducer protein blt1 (blt1) from Schizosaccharomyces pombe (strain 972 / ATCC 24843) (Fission yeast).